The chain runs to 199 residues: Cytochrome c-type cyt cy (199 aa).

Residues 7–27 (ITKIGVTLFAVALFYGFIYML) form a helical membrane-spanning segment. The segment covering 69 to 80 (AAETAEAAAPAE) has biased composition (low complexity). The segment at 69 to 93 (AAETAEAAAPAEPAAPPPPAYVEVD) is disordered. Residues C112, C115, H116, and M148 each contribute to the heme c site.

Binds 1 heme c group covalently per subunit.

The protein resides in the cell membrane. In terms of biological role, electron transfer pathways that operates during photosynthesis. This Rhodobacter capsulatus (strain ATCC BAA-309 / NBRC 16581 / SB1003) protein is Cytochrome c-type cyt cy (cycY).